Consider the following 203-residue polypeptide: Ras-like protein family member 10B (203 aa).

The small GTPase-like stretch occupies residues 1–203 (MVSTYRVAVL…ALRRNRCAIM (203 aa)). 11–18 (GARGVGKS) contributes to the GTP binding site. The Effector region motif lies at 33–42 (CVPTTARRLY). GTP contacts are provided by residues 59–62 (DFPP) and 128–131 (NKRD). Cysteine 200 carries the cysteine methyl ester modification. Cysteine 200 carries the S-geranylgeranyl cysteine lipid modification. Residues 201-203 (AIM) constitute a propeptide, removed in mature form.

This sequence belongs to the small GTPase superfamily. Ras family. In terms of assembly, interacts with CADPS. In terms of tissue distribution, expressed at high levels in skeletal muscle and, at much lower levels, in heart, brain and pancreas.

The protein localises to the cell membrane. It carries out the reaction GTP + H2O = GDP + phosphate + H(+). Functionally, may facilitate the release of atrial natriuretic peptide by cardiomyocytes and hence play a role in the regulation of arterial pressure. In Homo sapiens (Human), this protein is Ras-like protein family member 10B (RASL10B).